The sequence spans 130 residues: Cholecystokinin (130 aa).

The signal sequence occupies residues 1–20 (MYIGICICVLLAALSASSTG). A propeptide spanning residues 21–60 (QQTVGSMNEDPGAREIEQQNILQHPRHIRASSSAQLKPFQ) is cleaved from the precursor. Y112 carries the sulfotyrosine modification. F118 carries the phenylalanine amide modification. The propeptide occupies 122–130 (SAEEYEYSS). Sulfotyrosine occurs at positions 126 and 128.

It belongs to the gastrin/cholecystokinin family. In terms of processing, the precursor is cleaved by proteases to produce a number of active cholecystokinins. In terms of tissue distribution, expressed in brain, lung, testis and throughout the length of the small intestine. In the brain, expressed predominantly in the optic tectum and brain stem.

Its subcellular location is the secreted. This peptide hormone induces gall bladder contraction and the release of pancreatic enzymes in the gut. Its function in the brain is not clear. The polypeptide is Cholecystokinin (CCK) (Aquarana catesbeiana (American bullfrog)).